We begin with the raw amino-acid sequence, 238 residues long: Small ribosomal subunit protein eS4 (238 aa).

The 64-residue stretch at 38 to 101 (LPLALIIRDV…GEVYRVVPDA (64 aa)) folds into the S4 RNA-binding domain.

This sequence belongs to the eukaryotic ribosomal protein eS4 family.

The chain is Small ribosomal subunit protein eS4 from Pyrobaculum aerophilum (strain ATCC 51768 / DSM 7523 / JCM 9630 / CIP 104966 / NBRC 100827 / IM2).